A 96-amino-acid polypeptide reads, in one-letter code: Auxin-responsive protein SAUR29 (96 aa).

It belongs to the ARG7 family.

The protein resides in the cell membrane. Functions as a positive effector of cell expansion through modulation of auxin transport. Involved in thermo-responsiveness of plant architecture. Enhances plasma membrane H(+)-ATPase. The protein is Auxin-responsive protein SAUR29 of Arabidopsis thaliana (Mouse-ear cress).